We begin with the raw amino-acid sequence, 546 residues long: Endoplasmic reticulum oxidoreductin-1 (546 aa).

The first 18 residues, 1–18 (MQLNKLMLGFMLCASALA), serve as a signal peptide directing secretion. Disulfide bonds link Cys84-Cys344, Cys94-Cys99, Cys137-Cys161, Cys144-Cys290, and Cys347-Cys350. Arg182, Thr184, Trp195, Ser223, His226, and Arg255 together coordinate FAD. The N-linked (GlcNAc...) asparagine glycan is linked to Asn337. The Nucleophile role is filled by Cys347. Cys350 is a catalytic residue. Asn422 and Asn449 each carry an N-linked (GlcNAc...) asparagine glycan.

Belongs to the EROs family. In terms of assembly, may function both as a monomer and a homodimer. The cofactor is FAD.

The protein localises to the endoplasmic reticulum membrane. Its function is as follows. Essential oxidoreductase that oxidizes proteins in the endoplasmic reticulum to produce disulfide bonds. Acts by oxidizing directly PDI1 isomerase through a direct disulfide exchange. Does not act as a direct oxidant of folding substrate, but relies on PDI1 to transfer oxidizing equivalent. Does not oxidize all pdi related proteins, suggesting that it can discriminate between PDI1 and related proteins. Its reoxidation probably involves electron transfer to molecular oxygen via FAD. Acts independently of glutathione. May be responsible for a significant proportion of reactive oxygen species (ROS) in the cell, thereby being a source of oxidative stress. The protein is Endoplasmic reticulum oxidoreductin-1 (ERO1) of Eremothecium gossypii (strain ATCC 10895 / CBS 109.51 / FGSC 9923 / NRRL Y-1056) (Yeast).